Consider the following 264-residue polypeptide: tRNA (guanine-N(1)-)-methyltransferase (264 aa).

149–154 contacts S-adenosyl-L-methionine; that stretch reads IGDYVL.

This sequence belongs to the RNA methyltransferase TrmD family. Homodimer.

Its subcellular location is the cytoplasm. It carries out the reaction guanosine(37) in tRNA + S-adenosyl-L-methionine = N(1)-methylguanosine(37) in tRNA + S-adenosyl-L-homocysteine + H(+). Functionally, specifically methylates guanosine-37 in various tRNAs. The polypeptide is tRNA (guanine-N(1)-)-methyltransferase (Methylobacillus flagellatus (strain ATCC 51484 / DSM 6875 / VKM B-1610 / KT)).